The sequence spans 97 residues: MRIIAILAAILLVALQVRAGPLQARGDEAPGQEQRGPEDQDISISFAWDKSSALQVSGSTRGMVCSCRLVFCRRTELRVGNCLIGGVSFTYCCTRVD.

A signal peptide spans 1–19 (MRIIAILAAILLVALQVRA). Residues 20 to 63 (GPLQARGDEAPGQEQRGPEDQDISISFAWDKSSALQVSGSTRGM) constitute a propeptide that is removed on maturation. Disulfide bonds link cysteine 65–cysteine 93, cysteine 67–cysteine 82, and cysteine 72–cysteine 92. Aspartate 97 is a propeptide.

The protein belongs to the alpha-defensin family. As to quaternary structure, homodimer; homodimerization seems to be required for killing S.aureus, but not E.coli. Interacts with CD4. Interacts with Bacillus anthracis lef; homodimerization is required for the interaction. The three-dimensional structure formed by the three intramolecular disulfide bridges is indispensable for effective bacterial killing.

Its subcellular location is the secreted. The protein localises to the cytoplasmic vesicle. It localises to the secretory vesicle. In terms of biological role, host-defense peptide that has antimicrobial activity against Gram-negative bacteria, and to a lesser extent also against Gram-positive bacteria and fungi. Exhibits antimicrobial activity against Gram-negative E.coli and E.aerogenes and Gram-positive S.faecalis, S.aureus and B.cereus and the yeast C.albicans (in vitro). Inhibits corticotropin (ACTH)-stimulated corticosterone production (in vitro). Inhibits enzymatic activity of B.anthracis lef/anthrax lethal factor (in vitro). This chain is Defensin alpha 4 (DEFA4), found in Pan troglodytes (Chimpanzee).